Here is a 249-residue protein sequence, read N- to C-terminus: Phosphomannomutase 1 (249 aa).

Asp-12 functions as the Nucleophile in the catalytic mechanism. Residues Asp-12 and Asp-14 each coordinate Mg(2+). The active-site Proton donor/acceptor is Asp-14. Alpha-D-mannose 1-phosphate contacts are provided by Arg-21, Arg-123, Arg-134, Arg-141, Ser-179, and Asp-181. Mg(2+) is bound by residues Asp-209, Asp-223, and Thr-227.

Belongs to the eukaryotic PMM family. In terms of assembly, homodimer.

Its subcellular location is the cytoplasm. The enzyme catalyses alpha-D-mannose 1-phosphate = D-mannose 6-phosphate. It participates in nucleotide-sugar biosynthesis; GDP-alpha-D-mannose biosynthesis; alpha-D-mannose 1-phosphate from D-fructose 6-phosphate: step 2/2. Involved in the synthesis of the GDP-mannose and dolichol-phosphate-mannose required for a number of critical mannosyl transfer reactions. The chain is Phosphomannomutase 1 (pmmA) from Dictyostelium discoideum (Social amoeba).